The primary structure comprises 302 residues: Oxygen-dependent coproporphyrinogen-III oxidase (302 aa).

Substrate is bound at residue serine 90. Histidine 94 and histidine 104 together coordinate a divalent metal cation. The active-site Proton donor is the histidine 104. Residue 106–108 coordinates substrate; sequence NVR. The a divalent metal cation site is built by histidine 143 and histidine 173. An important for dimerization region spans residues 238 to 273; it reads YVEFNLIYDRGTIFGLQSNGRTESILLSMPPIVKWR.

It belongs to the aerobic coproporphyrinogen-III oxidase family. Homodimer. A divalent metal cation is required as a cofactor.

The protein localises to the cytoplasm. The catalysed reaction is coproporphyrinogen III + O2 + 2 H(+) = protoporphyrinogen IX + 2 CO2 + 2 H2O. It participates in porphyrin-containing compound metabolism; protoporphyrin-IX biosynthesis; protoporphyrinogen-IX from coproporphyrinogen-III (O2 route): step 1/1. Involved in the heme biosynthesis. Catalyzes the aerobic oxidative decarboxylation of propionate groups of rings A and B of coproporphyrinogen-III to yield the vinyl groups in protoporphyrinogen-IX. In Methylobacillus flagellatus (strain ATCC 51484 / DSM 6875 / VKM B-1610 / KT), this protein is Oxygen-dependent coproporphyrinogen-III oxidase.